Reading from the N-terminus, the 458-residue chain is Glycine--tRNA ligase (458 aa).

Residues Arg-97 and Glu-171 each contribute to the substrate site. Residues 203–205, 213–218, 287–288, and 331–334 each bind ATP; these read RNE, FRTREF, EL, and GADR. Residue 218 to 222 participates in substrate binding; the sequence is FEQME. Position 327–331 (327–331) interacts with substrate; sequence EPSLG.

Belongs to the class-II aminoacyl-tRNA synthetase family. Homodimer.

Its subcellular location is the cytoplasm. The enzyme catalyses tRNA(Gly) + glycine + ATP = glycyl-tRNA(Gly) + AMP + diphosphate. Catalyzes the attachment of glycine to tRNA(Gly). The protein is Glycine--tRNA ligase of Bacillus thuringiensis subsp. konkukian (strain 97-27).